Reading from the N-terminus, the 133-residue chain is UPF0225 protein BB3385 (133 aa).

The protein belongs to the UPF0225 family.

This Bordetella bronchiseptica (strain ATCC BAA-588 / NCTC 13252 / RB50) (Alcaligenes bronchisepticus) protein is UPF0225 protein BB3385.